Here is a 218-residue protein sequence, read N- to C-terminus: MVTILQYSADVTATTISTYRSELSAQLAQNLGKWSFELKMYKPNPASIGRSEHHNGNIPQGQQEAAAADQEIGGVAALYTLTQAHSKGDMVYVTQGSAVQGQPGVVVSDSFDMVLQNKMKSIWILRQTLRGDGAEYELMGDAYGRVKVRLANVFLQGTFRGLLFQYEYEGDTLDDRQQQHLMEFIQSSGFPSSNLIIGGNGSGLVQTGTQFVEALAQK.

Belongs to the Mediator complex subunit 20 family. In terms of assembly, component of the Mediator complex.

It localises to the nucleus. Functionally, component of the Mediator complex, a coactivator involved in the regulated transcription of nearly all RNA polymerase II-dependent genes. Mediator functions as a bridge to convey information from gene-specific regulatory proteins to the basal RNA polymerase II transcription machinery. Mediator is recruited to promoters by direct interactions with regulatory proteins and serves as a scaffold for the assembly of a functional preinitiation complex with RNA polymerase II and the general transcription factors. In Yarrowia lipolytica (strain CLIB 122 / E 150) (Yeast), this protein is Mediator of RNA polymerase II transcription subunit 20 (SRB2).